Here is a 171-residue protein sequence, read N- to C-terminus: ATP synthase subunit b (171 aa).

Residues 26-46 (INLVLVIALLVYFLKGFLGGI) form a helical membrane-spanning segment.

The protein belongs to the ATPase B chain family. In terms of assembly, F-type ATPases have 2 components, F(1) - the catalytic core - and F(0) - the membrane proton channel. F(1) has five subunits: alpha(3), beta(3), gamma(1), delta(1), epsilon(1). F(0) has four main subunits: a(1), b(1), b'(1) and c(10-14). The alpha and beta chains form an alternating ring which encloses part of the gamma chain. F(1) is attached to F(0) by a central stalk formed by the gamma and epsilon chains, while a peripheral stalk is formed by the delta, b and b' chains.

It is found in the cellular thylakoid membrane. Functionally, f(1)F(0) ATP synthase produces ATP from ADP in the presence of a proton or sodium gradient. F-type ATPases consist of two structural domains, F(1) containing the extramembraneous catalytic core and F(0) containing the membrane proton channel, linked together by a central stalk and a peripheral stalk. During catalysis, ATP synthesis in the catalytic domain of F(1) is coupled via a rotary mechanism of the central stalk subunits to proton translocation. In terms of biological role, component of the F(0) channel, it forms part of the peripheral stalk, linking F(1) to F(0). The protein is ATP synthase subunit b of Synechococcus sp. (strain RCC307).